The following is a 291-amino-acid chain: Tyrosine recombinase XerD (291 aa).

Residues 1 to 82 (MEEGLIDRLL…ACKRLYIWME (82 aa)) form the Core-binding (CB) domain. Residues 103 to 285 (NIPTLITEQQ…ANVWLQGVVK (183 aa)) enclose the Tyr recombinase domain. Active-site residues include Arg-143, Lys-167, His-237, Arg-240, and His-263. Tyr-272 (O-(3'-phospho-DNA)-tyrosine intermediate) is an active-site residue.

It belongs to the 'phage' integrase family. XerD subfamily. Forms a cyclic heterotetrameric complex composed of two molecules of XerC and two molecules of XerD.

Its subcellular location is the cytoplasm. In terms of biological role, site-specific tyrosine recombinase, which acts by catalyzing the cutting and rejoining of the recombining DNA molecules. The XerC-XerD complex is essential to convert dimers of the bacterial chromosome into monomers to permit their segregation at cell division. It also contributes to the segregational stability of plasmids. The sequence is that of Tyrosine recombinase XerD from Neisseria meningitidis serogroup A / serotype 4A (strain DSM 15465 / Z2491).